The following is a 118-amino-acid chain: Non-specific lipid-transfer protein 2 (118 aa).

The N-terminal stretch at 1–25 (MARGMKLACVVLVICMVVIAPMAEG) is a signal peptide. 4 disulfide bridges follow: cysteine 29–cysteine 76, cysteine 39–cysteine 53, cysteine 54–cysteine 99, and cysteine 74–cysteine 113.

This sequence belongs to the plant LTP family.

Plant non-specific lipid-transfer proteins transfer phospholipids as well as galactolipids across membranes. May play a role in wax or cutin deposition in the cell walls of expanding epidermal cells and certain secretory tissues. Binds saturated fatty acids, jasmonic acid and, with highest efficiency, unsaturated fatty acids and lysolipids. The sequence is that of Non-specific lipid-transfer protein 2 from Lens culinaris (Lentil).